We begin with the raw amino-acid sequence, 445 residues long: FAS-associated factor 2 (445 aa).

Residues 12–53 (EQTEKLLQFQDLTGIESMDQCRQTLQQHNWNIEAAVQDRLNE) enclose the UBA domain. Residues 275–353 (SERLEREERN…ERKSECLPAE (79 aa)) adopt a coiled-coil conformation. The span at 303–348 (ADQEKERKKKEKQEQKRREEEEAQLKQMLEERKKRNLEEEKERKSE) shows a compositional bias: basic and acidic residues. The disordered stretch occupies residues 303 to 354 (ADQEKERKKKEKQEQKRREEEEAQLKQMLEERKKRNLEEEKERKSECLPAEP). The 83-residue stretch at 357–439 (DHPDNVKIIF…GLSQSQLLFV (83 aa)) folds into the UBX domain.

Its subcellular location is the cytoplasm. The protein localises to the lipid droplet. The protein resides in the endoplasmic reticulum. Functionally, plays an important role in endoplasmic reticulum-associated degradation (ERAD) that mediates ubiquitin-dependent degradation of misfolded endoplasmic reticulum proteins. Involved in inhibition of lipid droplet degradation. Involved in stress granule disassembly. The polypeptide is FAS-associated factor 2 (faf2) (Xenopus tropicalis (Western clawed frog)).